Here is a 252-residue protein sequence, read N- to C-terminus: 5'-nucleotidase SurE (252 aa).

D8, D9, S39, and N95 together coordinate a divalent metal cation.

The protein belongs to the SurE nucleotidase family. A divalent metal cation is required as a cofactor.

Its subcellular location is the cytoplasm. It carries out the reaction a ribonucleoside 5'-phosphate + H2O = a ribonucleoside + phosphate. Functionally, nucleotidase that shows phosphatase activity on nucleoside 5'-monophosphates. The polypeptide is 5'-nucleotidase SurE (Clostridium botulinum (strain Loch Maree / Type A3)).